The following is a 480-amino-acid chain: DnaJ homolog subfamily A member 3, mitochondrial (480 aa).

The residue at position 58 (Arg58) is an Omega-N-methylarginine; by CARM1. Residues 93–158 enclose the J domain; it reads DYYQILGVPR…VKRKQYDAYG (66 aa). Lys134 is subject to N6-acetyllysine. The segment at 223–301 adopts a CR-type zinc-finger fold; that stretch reads GVNKEFTVNI…CRGAGQAKQK (79 aa). Cys236 is a binding site for Zn(2+). CXXCXGXG motif repeat units follow at residues 236-243, 253-260, 275-282, and 289-296; these read CERCNGKG, CHYCGGSG, CRRCGGRG, and CVVCRGAG. Position 238 is an omega-N-methylarginine; by CARM1 (Arg238). Cys239, Cys253, Cys256, Cys275, Cys278, Cys289, and Cys292 together coordinate Zn(2+). Position 293 is an omega-N-methylarginine; by CARM1 (Arg293). Ser398 carries the post-translational modification Phosphoserine. Residues 443 to 456 are compositionally biased toward polar residues; it reads LTSSGGSTMDSSAG. The tract at residues 443–471 is disordered; that stretch reads LTSSGGSTMDSSAGSKARREAGEDEEGFL.

In terms of assembly, interacts with JAK2, HSPA9B and IFN-gammaR2 chain. Interacts with Ras GTPase-activating protein 1 (RASA1). Isoform 2 interacts with MUSK (via the cytoplasmic domain). In terms of processing, tyrosine phosphorylated. Widely expressed with highest levels in heart, liver, lung and skeletal muscles. Also expressed in keratinocytes; expression level and distribution is altered in basal cell carcinomas.

It localises to the mitochondrion matrix. The protein localises to the cytoplasm. Its subcellular location is the cytosol. It is found in the postsynaptic cell membrane. Modulates apoptotic signal transduction or effector structures within the mitochondrial matrix. Affect cytochrome C release from the mitochondria and caspase 3 activation, but not caspase 8 activation. Isoform 1 increases apoptosis triggered by both TNF and the DNA-damaging agent mytomycin C; in sharp contrast, isoform 2 suppresses apoptosis. Can modulate IFN-gamma-mediated transcriptional activity. Isoform 2 may play a role in neuromuscular junction development as an effector of the MUSK signaling pathway. This chain is DnaJ homolog subfamily A member 3, mitochondrial (DNAJA3), found in Homo sapiens (Human).